Consider the following 473-residue polypeptide: Serine palmitoyltransferase 1 (473 aa).

Over 1-15 (MATVAEQWVLVEMVQ) the chain is Lumenal. Residues 1 to 66 (MATVAEQWVL…KEELIEEWQP (66 aa)) form an interaction with SPTLC2 region. Residues 16 to 36 (ALYEAPAYHLILEGILILWII) traverse the membrane as a helical segment. The Cytoplasmic segment spans residues 37–473 (RLLFSKTYKL…ISEVAQTVLL (437 aa)). Tyrosine 164 carries the post-translational modification Phosphotyrosine; by ABL.

Belongs to the class-II pyridoxal-phosphate-dependent aminotransferase family. In terms of assembly, component of the serine palmitoyltransferase (SPT) complex, which is also composed of SPTLC2 or SPTLC3 and SPTSSA or SPTSSB. The heterodimer with SPTLC2 or SPTLC3 forms the catalytic core of the enzyme, while SPTSSA or SPTSSB subunits determine substrate specificity. SPT also interacts with ORMDL proteins, especially ORMDL3, which negatively regulate SPT activity in the presence of ceramides. Forms dimers of heterodimers with SPTLC2. Interacts with RTN4. Pyridoxal 5'-phosphate is required as a cofactor. Phosphorylation at Tyr-164 inhibits activity and promotes cell survival.

It localises to the endoplasmic reticulum membrane. The catalysed reaction is L-serine + hexadecanoyl-CoA + H(+) = 3-oxosphinganine + CO2 + CoA. The enzyme catalyses octadecanoyl-CoA + L-serine + H(+) = 3-oxoeicosasphinganine + CO2 + CoA. It carries out the reaction tetradecanoyl-CoA + L-serine + H(+) = 3-oxohexadecasphinganine + CO2 + CoA. It catalyses the reaction dodecanoyl-CoA + L-serine + H(+) = 3-oxotetradecasphinganine + CO2 + CoA. It participates in lipid metabolism; sphingolipid metabolism. With respect to regulation, SPT complex catalytic activity is negatively regulated by ORMDL proteins, including ORMDL3, in the presence of ceramides. This mechanism allows to maintain ceramide levels at sufficient concentrations for the production of complex sphingolipids, but which prevents the accumulation of ceramides to levels that trigger apoptosis. Component of the serine palmitoyltransferase multisubunit enzyme (SPT) that catalyzes the initial and rate-limiting step in sphingolipid biosynthesis by condensing L-serine and activated acyl-CoA (most commonly palmitoyl-CoA) to form long-chain bases. The SPT complex is also composed of SPTLC2 or SPTLC3 and SPTSSA or SPTSSB. Within this complex, the heterodimer with SPTLC2 or SPTLC3 forms the catalytic core. The composition of the serine palmitoyltransferase (SPT) complex determines the substrate preference. The SPTLC1-SPTLC2-SPTSSA complex shows a strong preference for C16-CoA substrate, while the SPTLC1-SPTLC3-SPTSSA isozyme uses both C14-CoA and C16-CoA as substrates, with a slight preference for C14-CoA. The SPTLC1-SPTLC2-SPTSSB complex shows a strong preference for C18-CoA substrate, while the SPTLC1-SPTLC3-SPTSSB isozyme displays an ability to use a broader range of acyl-CoAs, without apparent preference. Required for adipocyte cell viability and metabolic homeostasis. This is Serine palmitoyltransferase 1 (SPTLC1) from Bos taurus (Bovine).